Here is a 435-residue protein sequence, read N- to C-terminus: MTKKSRFDQFGFQPFIGLAIDKLGFYEPTEVQQKLIPGILKGESIIGQSQTGTGKTHTFILPIINNVNPEKDAVQAVITAPSRELATQIYNEIRKVTKYSEKEIAVQLVIGGTDKQRAIDKLKKQPQIIVGTPGRINDLIREQALFVHTAKTLVIDEADMTLDMGFLNDVDHIAGKMPANLQMLVFSATIPQKLKPFLSKYMENPRYEHIQPKVAASKTVEHRIMATRSRNKLDLLKNVLVGSQPYLAIVFTNTKTTADEVANGLIERGLKVAKIHGDVNPRERKRTMKQIENLDYQYVVATDLAARGIDIQGISHVVNYELPDDLDFYIHRTGRTGRAGHSGIALTLFEPADEDRLNQLEKMGIEFKHVDWKNKEFVTLEDRNRRAKREAKRETADPREIGMRKKAKQKGKPNYKKKINYKMNEIKRRERRKKR.

The Q motif signature appears at 5-33 (SRFDQFGFQPFIGLAIDKLGFYEPTEVQQ). In terms of domain architecture, Helicase ATP-binding spans 36 to 208 (IPGILKGESI…SKYMENPRYE (173 aa)). 49-56 (SQTGTGKT) is a binding site for ATP. Residues 156 to 159 (DEAD) carry the DEAD box motif. The region spanning 235 to 378 (LLKNVLVGSQ…HVDWKNKEFV (144 aa)) is the Helicase C-terminal domain. A disordered region spans residues 383–435 (RNRRAKREAKRETADPREIGMRKKAKQKGKPNYKKKINYKMNEIKRRERRKKR). Residues 391–403 (AKRETADPREIGM) show a composition bias toward basic and acidic residues. Residues 404 to 420 (RKKAKQKGKPNYKKKIN) are compositionally biased toward basic residues.

The protein belongs to the DEAD box helicase family. CshB subfamily.

It localises to the cytoplasm. It carries out the reaction ATP + H2O = ADP + phosphate + H(+). DEAD-box RNA helicase involved in cold tolerance, motility, and tolerance to heat, alkali and oxidative stress. In Listeria monocytogenes serovar 1/2a (strain ATCC BAA-679 / EGD-e), this protein is DEAD-box ATP-dependent RNA helicase CshB.